A 238-amino-acid chain; its full sequence is Inactive glycoside hydrolase XLP1 (238 aa).

The signal sequence occupies residues 1 to 19 (MKSFLIAIVIAVLLPVSAA). Glu-133 is an active-site residue. N-linked (GlcNAc...) asparagine glycans are attached at residues Asn-171 and Asn-187. Glu-219 is a catalytic residue.

Belongs to the glycosyl hydrolase 12 (cellulase H) family. As to quaternary structure, interacts with host apoplastic glucanase inhibitor GIP2.

It is found in the secreted. Non-functional secreted XEG1-like protein that binds to host Nicotiana benthamiana apoplastic glucanase inhibitor protein GIP2 more tightly than does XEG1, thus it outcompetes XEG1 for GIP2 binding and frees functional XEG1 to support P.parasitica infection. With XEG1, is required to elevate apoplastic sugar during P.parasitica infection. The chain is Inactive glycoside hydrolase XLP1 from Phytophthora nicotianae (strain INRA-310) (Phytophthora parasitica).